The primary structure comprises 343 residues: L-threonine 3-dehydrogenase (343 aa).

Cys40 provides a ligand contact to Zn(2+). Catalysis depends on charge relay system residues Thr42 and His45. Zn(2+) contacts are provided by His65, Glu66, Cys95, Cys98, Cys101, and Cys109. NAD(+)-binding positions include Ile177, Asp197, Arg202, 264–266, and 288–289; these read LGI and IY.

It belongs to the zinc-containing alcohol dehydrogenase family. Homotetramer. Zn(2+) serves as cofactor.

The protein localises to the cytoplasm. It carries out the reaction L-threonine + NAD(+) = (2S)-2-amino-3-oxobutanoate + NADH + H(+). It participates in amino-acid degradation; L-threonine degradation via oxydo-reductase pathway; glycine from L-threonine: step 1/2. In terms of biological role, catalyzes the NAD(+)-dependent oxidation of L-threonine to 2-amino-3-ketobutyrate. The protein is L-threonine 3-dehydrogenase of Aliivibrio salmonicida (strain LFI1238) (Vibrio salmonicida (strain LFI1238)).